We begin with the raw amino-acid sequence, 545 residues long: Protein FAR1-RELATED SEQUENCE 9 (545 aa).

One can recognise an FAR1 domain in the interval 22 to 65; it reads LNYLKRRQLENPGFLYAIEDDCGNVFWADPTCRLNYTYFGDTLV. One can recognise an MULE domain in the interval 66-150; that stretch reads FDTTYRRGKR…RVFSQTRLRF (85 aa). An SWIM-type zinc finger spans residues 345–381; sequence HTVSFDSLEVKANCSCQMFEYSGIICRHILAVFSAKN. The interval 460–495 is disordered; sequence SNRTPGTRLPNGEAYPSEEARETANATNHPGGEKER. The stretch at 492 to 545 forms a coiled coil; the sequence is EKERTILELTAELERTGQRCEVYRANLLSILRDMEEQKFQLSLKVQNARLSLKE.

This sequence belongs to the FHY3/FAR1 family. As to expression, expressed in hypocotyls, rosette and cauline leaves, inflorescences stems, flowers and siliques.

It is found in the nucleus. Putative transcription activator involved in regulating light control of development. May act as a negative regulator specific to phyB signaling. In Arabidopsis thaliana (Mouse-ear cress), this protein is Protein FAR1-RELATED SEQUENCE 9 (FRS9).